The primary structure comprises 138 residues: Holo-[acyl-carrier-protein] synthase (138 aa).

Residues Asp-11 and Glu-65 each contribute to the Mg(2+) site.

It belongs to the P-Pant transferase superfamily. AcpS family. Requires Mg(2+) as cofactor.

It localises to the cytoplasm. It carries out the reaction apo-[ACP] + CoA = holo-[ACP] + adenosine 3',5'-bisphosphate + H(+). Functionally, transfers the 4'-phosphopantetheine moiety from coenzyme A to a Ser of acyl-carrier-protein. This Ralstonia nicotianae (strain ATCC BAA-1114 / GMI1000) (Ralstonia solanacearum) protein is Holo-[acyl-carrier-protein] synthase.